We begin with the raw amino-acid sequence, 270 residues long: Diaminopimelate epimerase (270 aa).

Substrate is bound by residues Asn-15, Gln-49, and Asn-66. The active-site Proton donor is Cys-75. Substrate is bound by residues 76–77 (GN), Asn-155, Asn-187, and 204–205 (ER). The Proton acceptor role is filled by Cys-213. 214–215 (GS) lines the substrate pocket.

The protein belongs to the diaminopimelate epimerase family. Homodimer.

The protein resides in the cytoplasm. It carries out the reaction (2S,6S)-2,6-diaminopimelate = meso-2,6-diaminopimelate. The protein operates within amino-acid biosynthesis; L-lysine biosynthesis via DAP pathway; DL-2,6-diaminopimelate from LL-2,6-diaminopimelate: step 1/1. Catalyzes the stereoinversion of LL-2,6-diaminopimelate (L,L-DAP) to meso-diaminopimelate (meso-DAP), a precursor of L-lysine and an essential component of the bacterial peptidoglycan. In Rickettsia conorii (strain ATCC VR-613 / Malish 7), this protein is Diaminopimelate epimerase.